We begin with the raw amino-acid sequence, 234 residues long: Thymidine kinase, cytosolic (234 aa).

Ser13 carries the phosphoserine modification. Residues 26-33 (GPMFSGKS), 58-60 (DTR), and 97-100 (DEGQ) each bind ATP. Catalysis depends on Glu98, which acts as the Proton acceptor. Phe128 serves as a coordination point for substrate. Residues Cys153 and Cys156 each contribute to the Zn(2+) site. Substrate contacts are provided by residues 172–176 (VEVIG) and Tyr181. Residues Cys185 and Cys188 each contribute to the Zn(2+) site. Positions 203–205 (KEN) match the KEN box motif.

Belongs to the thymidine kinase family. Homotetramer. Tetramerization from dimerization is induced by ATP and increases catalytic efficiency due to a high affinity for thymidine. Tetramerization is inhibited by phosphorylation at Ser-13. Interacts (via the KEN box) with FZR1. Phosphorylated on Ser-13 in mitosis. Phosphorylation of Ser-13 by CDK1 during mitosis reduces homotetramerization and catalytic efficiency when DNA replication is complete and intracellular TK1 is still present at a high level. Post-translationally, polyubiquitinated. Postmitosis, ubiquitination leads to proteasomal degradation. The KEN box sequence located at the C-terminal region targets for degradation by the anaphase promoting complex (APC/C) activated and rate-limited by FZR1.

It localises to the cytoplasm. It carries out the reaction thymidine + ATP = dTMP + ADP + H(+). In terms of biological role, cell-cycle-regulated enzyme of importance in nucleotide metabolism. Catalyzes the first enzymatic step in the salvage pathway converting thymidine into thymidine monophosphate. Transcriptional regulation limits expression to the S phase of the cell cycle and transient expression coincides with the oscillation in the intracellular dTTP concentration. In Cricetulus griseus (Chinese hamster), this protein is Thymidine kinase, cytosolic (TK1).